We begin with the raw amino-acid sequence, 778 residues long: Serine/threonine-protein kinase BRSK1 (778 aa).

Gly residues predominate over residues 1-12 (MSSGAKEGGGGS). Positions 1 to 29 (MSSGAKEGGGGSPAYHLPHPHPHPPQHAQ) are disordered. The 252-residue stretch at 34–285 (YRLEKTLGKG…LEQIQKHPWY (252 aa)) folds into the Protein kinase domain. Residues 40–48 (LGKGQTGLV) and Lys-63 contribute to the ATP site. Asp-156 acts as the Proton acceptor in catalysis. Thr-189 carries the phosphothreonine; by LKB1 modification. Residues 314-356 (ELDPDVLESMASLGCFRDRERLHRELRSEEENQEKMIYYLLLD) enclose the UBA domain. The segment covering 362–383 (PSCEDQDLPPRNDVDPPRKRVD) has biased composition (basic and acidic residues). Positions 362–548 (PSCEDQDLPP…SPGGGVGGAA (187 aa)) are disordered. Phosphoserine is present on residues Ser-399, Ser-443, Ser-447, and Ser-450. The span at 430–457 (SRSVSGASTGLSSSPLSSPRSPVFSFSP) shows a compositional bias: low complexity. Omega-N-methylarginine occurs at positions 466, 481, 484, and 498. The segment covering 491–508 (QPPPPSARSTPLPGPPGS) has biased composition (pro residues). Ser-508 is modified (phosphoserine). Positions 509–533 (PRSSGGTPLHSPLHTPRASPTGTPG) are enriched in low complexity. The residue at position 525 (Arg-525) is an Omega-N-methylarginine. Thr-529 and Thr-535 each carry phosphothreonine. Position 550 is an omega-N-methylarginine (Arg-550). The residue at position 583 (Thr-583) is a Phosphothreonine. 3 positions are modified to phosphoserine: Ser-586, Ser-587, and Ser-601. Residues 719-778 (QPSVQALADEKNGAQTRPAGAPPRSLQPPPGRPDPELSSSPRRGPPKDKKLLATNGTPLP) form a disordered region.

Belongs to the protein kinase superfamily. CAMK Ser/Thr protein kinase family. SNF1 subfamily. Mg(2+) serves as cofactor. Phosphorylated at Thr-189 by STK11/LKB1 in complex with STE20-related adapter-alpha (STRADA) pseudo kinase and CAB39. Not phosphorylated at Thr-189 by CaMKK2. In contrast, it is phosphorylated and activated by CaMKK1. May be inactivated via dephosphorylation of Thr-189 by PP2C. Widely expressed, with highest levels in brain and testis. Protein levels remain constant throughout the cell cycle.

The protein localises to the cytoplasm. It localises to the nucleus. It is found in the cytoskeleton. Its subcellular location is the microtubule organizing center. The protein resides in the centrosome. The protein localises to the synapse. It localises to the presynaptic active zone. It is found in the cytoplasmic vesicle. Its subcellular location is the secretory vesicle. The protein resides in the synaptic vesicle. The catalysed reaction is L-seryl-[protein] + ATP = O-phospho-L-seryl-[protein] + ADP + H(+). It carries out the reaction L-threonyl-[protein] + ATP = O-phospho-L-threonyl-[protein] + ADP + H(+). It catalyses the reaction L-seryl-[tau protein] + ATP = O-phospho-L-seryl-[tau protein] + ADP + H(+). The enzyme catalyses L-threonyl-[tau protein] + ATP = O-phospho-L-threonyl-[tau protein] + ADP + H(+). Activated by phosphorylation on Thr-189 by STK11/LKB1. Serine/threonine-protein kinase that plays a key role in polarization of neurons and centrosome duplication. Phosphorylates CDC25B, CDC25C, MAPT/TAU, RIMS1, TUBG1, TUBG2 and WEE1. Following phosphorylation and activation by STK11/LKB1, acts as a key regulator of polarization of cortical neurons, probably by mediating phosphorylation of microtubule-associated proteins such as MAPT/TAU at 'Thr-529' and 'Ser-579'. Also regulates neuron polarization by mediating phosphorylation of WEE1 at 'Ser-642' in postmitotic neurons, leading to down-regulate WEE1 activity in polarized neurons. In neurons, localizes to synaptic vesicles and plays a role in neurotransmitter release, possibly by phosphorylating RIMS1. Also acts as a positive regulator of centrosome duplication by mediating phosphorylation of gamma-tubulin (TUBG1 and TUBG2) at 'Ser-131', leading to translocation of gamma-tubulin and its associated proteins to the centrosome. Involved in the UV-induced DNA damage checkpoint response, probably by inhibiting CDK1 activity through phosphorylation and activation of WEE1, and inhibition of CDC25B and CDC25C. In Homo sapiens (Human), this protein is Serine/threonine-protein kinase BRSK1 (BRSK1).